The following is a 347-amino-acid chain: Ataxin-7-like protein 3 (347 aa).

The SGF11-type zinc-finger motif lies at 84-105; the sequence is CVCPNCSRSIAASRFAPHLEKC. Residues 116 to 125 show a composition bias toward low complexity; that stretch reads ANRRIANSNN. Residues 116–184 are disordered; it reads ANRRIANSNN…GELSNSDPFK (69 aa). Serine 129 and serine 131 each carry phosphoserine. Residues 132–141 are compositionally biased toward acidic residues; sequence DQEDNDDIND. The 68-residue stretch at 196–263 folds into the SCA7 domain; it reads LGPEELRSLL…SLDNDSFDMT (68 aa). The span at 275 to 288 shows a compositional bias: low complexity; sequence DGSSDLSPSDSGSS. The tract at residues 275–347 is disordered; it reads DGSSDLSPSD…PTPSIYDDIN (73 aa). A phosphoserine mark is found at serine 278, serine 281, and serine 326.

Belongs to the SGF11 family. Component of some SAGA transcription coactivator-HAT complexes, at least composed of ATXN7, ATXN7L3, ENY2, GCN5L2, SUPT3H, TAF10, TRRAP and USP22. Within the SAGA complex, ENY2, ATXN7, ATXN7L3, and USP22 form an additional subcomplex of SAGA called the DUB module (deubiquitination module). Interacts directly with ENY2 and USP22.

The protein localises to the nucleus. In terms of biological role, component of the transcription regulatory histone acetylation (HAT) complex SAGA, a multiprotein complex that activates transcription by remodeling chromatin and mediating histone acetylation and deubiquitination. Within the SAGA complex, participates in a subcomplex that specifically deubiquitinates both histones H2A and H2B. The SAGA complex is recruited to specific gene promoters by activators such as MYC, where it is required for transcription. Required for nuclear receptor-mediated transactivation. Within the complex, it is required to recruit USP22 and ENY2 into the SAGA complex. Regulates H2B monoubiquitination (H2Bub1) levels. Affects subcellular distribution of ENY2, USP22 and ATXN7L3B. This Homo sapiens (Human) protein is Ataxin-7-like protein 3.